The sequence spans 101 residues: UPF0213 protein VC0395_0675/VC395_A0575 (101 aa).

The region spanning 9 to 85 (SPWFVYLVRC…KALSKSQKEA (77 aa)) is the GIY-YIG domain.

It belongs to the UPF0213 family.

This is UPF0213 protein VC0395_0675/VC395_A0575 from Vibrio cholerae serotype O1 (strain ATCC 39541 / Classical Ogawa 395 / O395).